A 440-amino-acid polypeptide reads, in one-letter code: Tyrosine--tRNA ligase (440 aa).

L-tyrosine is bound at residue tyrosine 46. The 'HIGH' region signature appears at proline 51–asparagine 60. L-tyrosine contacts are provided by tyrosine 181 and glutamine 185. Positions lysine 241–serine 245 match the 'KMSKS' region motif. Residue lysine 244 coordinates ATP. Residues aspartate 373–asparagine 439 form the S4 RNA-binding domain.

This sequence belongs to the class-I aminoacyl-tRNA synthetase family. TyrS type 1 subfamily. Homodimer.

It is found in the cytoplasm. The catalysed reaction is tRNA(Tyr) + L-tyrosine + ATP = L-tyrosyl-tRNA(Tyr) + AMP + diphosphate + H(+). In terms of biological role, catalyzes the attachment of tyrosine to tRNA(Tyr) in a two-step reaction: tyrosine is first activated by ATP to form Tyr-AMP and then transferred to the acceptor end of tRNA(Tyr). In Bifidobacterium longum (strain NCC 2705), this protein is Tyrosine--tRNA ligase.